We begin with the raw amino-acid sequence, 257 residues long: Methylthioribulose-1-phosphate dehydratase (257 aa).

Position 107 (Cys107) interacts with substrate. Zn(2+)-binding residues include His125 and His127. The active-site Proton donor/acceptor is Glu148. His210 serves as a coordination point for Zn(2+).

Belongs to the aldolase class II family. MtnB subfamily. The cofactor is Zn(2+).

Its subcellular location is the cytoplasm. The enzyme catalyses 5-(methylsulfanyl)-D-ribulose 1-phosphate = 5-methylsulfanyl-2,3-dioxopentyl phosphate + H2O. Its pathway is amino-acid biosynthesis; L-methionine biosynthesis via salvage pathway; L-methionine from S-methyl-5-thio-alpha-D-ribose 1-phosphate: step 2/6. In terms of biological role, catalyzes the dehydration of methylthioribulose-1-phosphate (MTRu-1-P) into 2,3-diketo-5-methylthiopentyl-1-phosphate (DK-MTP-1-P). In Lachancea thermotolerans (strain ATCC 56472 / CBS 6340 / NRRL Y-8284) (Yeast), this protein is Methylthioribulose-1-phosphate dehydratase.